The chain runs to 347 residues: S-adenosylmethionine:tRNA ribosyltransferase-isomerase (347 aa).

This sequence belongs to the QueA family. Monomer.

The protein resides in the cytoplasm. It carries out the reaction 7-aminomethyl-7-carbaguanosine(34) in tRNA + S-adenosyl-L-methionine = epoxyqueuosine(34) in tRNA + adenine + L-methionine + 2 H(+). The protein operates within tRNA modification; tRNA-queuosine biosynthesis. In terms of biological role, transfers and isomerizes the ribose moiety from AdoMet to the 7-aminomethyl group of 7-deazaguanine (preQ1-tRNA) to give epoxyqueuosine (oQ-tRNA). The protein is S-adenosylmethionine:tRNA ribosyltransferase-isomerase of Bordetella pertussis (strain Tohama I / ATCC BAA-589 / NCTC 13251).